Here is a 489-residue protein sequence, read N- to C-terminus: Glycogen synthase (489 aa).

Lys-15 is an ADP-alpha-D-glucose binding site.

Belongs to the glycosyltransferase 1 family. Bacterial/plant glycogen synthase subfamily.

The catalysed reaction is [(1-&gt;4)-alpha-D-glucosyl](n) + ADP-alpha-D-glucose = [(1-&gt;4)-alpha-D-glucosyl](n+1) + ADP + H(+). It functions in the pathway glycan biosynthesis; glycogen biosynthesis. Synthesizes alpha-1,4-glucan chains using ADP-glucose. The sequence is that of Glycogen synthase from Francisella tularensis subsp. mediasiatica (strain FSC147).